The chain runs to 325 residues: Lipoyl synthase (325 aa).

The [4Fe-4S] cluster site is built by Cys66, Cys71, Cys77, Cys92, Cys96, Cys99, and Ser303. The 215-residue stretch at Trp78 to Ala292 folds into the Radical SAM core domain.

Belongs to the radical SAM superfamily. Lipoyl synthase family. [4Fe-4S] cluster is required as a cofactor.

The protein resides in the cytoplasm. It catalyses the reaction [[Fe-S] cluster scaffold protein carrying a second [4Fe-4S](2+) cluster] + N(6)-octanoyl-L-lysyl-[protein] + 2 oxidized [2Fe-2S]-[ferredoxin] + 2 S-adenosyl-L-methionine + 4 H(+) = [[Fe-S] cluster scaffold protein] + N(6)-[(R)-dihydrolipoyl]-L-lysyl-[protein] + 4 Fe(3+) + 2 hydrogen sulfide + 2 5'-deoxyadenosine + 2 L-methionine + 2 reduced [2Fe-2S]-[ferredoxin]. It functions in the pathway protein modification; protein lipoylation via endogenous pathway; protein N(6)-(lipoyl)lysine from octanoyl-[acyl-carrier-protein]: step 2/2. Functionally, catalyzes the radical-mediated insertion of two sulfur atoms into the C-6 and C-8 positions of the octanoyl moiety bound to the lipoyl domains of lipoate-dependent enzymes, thereby converting the octanoylated domains into lipoylated derivatives. This is Lipoyl synthase from Mycobacterium sp. (strain JLS).